We begin with the raw amino-acid sequence, 1588 residues long: Ubiquitin carboxyl-terminal hydrolase 54 (1588 aa).

Arg-12 carries the post-translational modification Omega-N-methylarginine. In terms of domain architecture, USP spans 31–352; that stretch reads KGLSNEPGQN…QPLLLLYADP (322 aa). Cys-42 (nucleophile) is an active-site residue. The Zn(2+) site is built by His-67, Cys-69, Cys-74, Cys-77, His-133, Cys-145, Cys-150, His-153, Cys-166, Cys-169, Cys-225, and Cys-229. The Proton acceptor role is filled by His-302. 2 stretches are compositionally biased toward basic and acidic residues: residues 382–391 and 424–434; these read GHLTDSECNQ and SEGETLKEKQA. Disordered stretches follow at residues 382–519, 555–577, and 601–624; these read GHLT…PTWR, FTPDEVSKPTANDIKDGGSRSQH, and ESGYESSERNSSSPVSLDAAPPDS. The residue at position 424 (Ser-424) is a Phosphoserine. A compositionally biased stretch (polar residues) spans 453-471; the sequence is TVSNMIHSRPSLASQTSAG. The segment covering 499–513 has biased composition (low complexity); that stretch reads TESTSSEAKSSSSSK. Residues 555 to 572 are compositionally biased toward basic and acidic residues; that stretch reads FTPDEVSKPTANDIKDGG. The span at 601–616 shows a compositional bias: low complexity; the sequence is ESGYESSERNSSSPVS. Residues Ser-613 and Ser-616 each carry the phosphoserine modification. Residues 682-712 are a coiled coil; that stretch reads ELDELQEEVVRRAQEQELRKKREKELEAAKG. 4 disordered regions span residues 801–834, 1089–1182, 1221–1242, and 1491–1561; these read RSLQDRMQQQASSQQPVQPSASLPSQGGALPQPT, QNTS…PDMY, SQVKPSAPGPGDKSSSHDSHPR, and WGNL…RSPG. The span at 808–826 shows a compositional bias: low complexity; the sequence is QQQASSQQPVQPSASLPSQ. A compositionally biased stretch (basic and acidic residues) spans 1126–1147; sequence GREHCRWVKQPRSPDGRERPPC. Ser-1138 is subject to Phosphoserine. Over residues 1510–1524 the composition is skewed to polar residues; it reads PSSNLHVPLRSTWNS. The segment covering 1536–1547 has biased composition (basic and acidic residues); it reads RRIDMPPDDDWR.

The protein belongs to the peptidase C19 family.

The catalysed reaction is Thiol-dependent hydrolysis of ester, thioester, amide, peptide and isopeptide bonds formed by the C-terminal Gly of ubiquitin (a 76-residue protein attached to proteins as an intracellular targeting signal).. Functionally, deubiquitinase that specifically mediates 'Lys-63'-linked deubiquitination of substrates with a polyubiquitin chain composed of at least 3 ubiquitins. Specifically recognizes ubiquitin chain in position S2 and catalyzes cleavage of polyubiquitin within 'Lys-63'-linked chains. Not able to deubiquitinate substrates with shorter ubiquitin chains. Mediates deubiquitination of PLK4, maintaining PLK4 stability by reducing its ubiquitination-mediated degradation. This chain is Ubiquitin carboxyl-terminal hydrolase 54 (Usp54), found in Mus musculus (Mouse).